The following is a 381-amino-acid chain: cAMP-dependent protein kinase type I-alpha regulatory subunit (381 aa).

Met1 carries the post-translational modification N-acetylmethionine. Residues 1 to 135 (MESGSTAASE…AALAKAIEKN (135 aa)) are dimerization and phosphorylation. The residue at position 3 (Ser3) is a Phosphoserine. A disordered region spans residues 64 to 96 (QIQNLQKAGTRTDSREDEISPPPPNPVVKGRRR). At Thr75 the chain carries Phosphothreonine. A phosphoserine mark is found at Ser77 and Ser83. A Pseudophosphorylation motif motif is present at residues 96–100 (RRGAI). A Phosphoserine modification is found at Ser101. 3',5'-cyclic AMP is bound by residues 137–254 (LFSH…SKVS), Glu202, Arg211, 255–381 (ILES…SLSV), Glu326, and Arg335. The residue at position 258 (Ser258) is a Phosphoserine.

It belongs to the cAMP-dependent kinase regulatory chain family. The inactive holoenzyme is composed of two regulatory chains and two catalytic chains. Activation by cAMP releases the two active catalytic monomers and the regulatory dimer. Interacts with PRKACA and PRKACB. PRKAR1A also interacts with RFC2; the complex may be involved in cell survival. Interacts with AKAP4. Interacts with RARA; the interaction occurs in the presence of cAMP or FSH and regulates RARA transcriptional activity. Interacts with the phosphorylated form of PJA2. Interacts with CBFA2T3. Interacts with PRKX; regulates this cAMP-dependent protein kinase. Interacts with smAKAP; this interaction may target PRKAR1A to the plasma membrane. Interacts with AICDA. In terms of processing, the pseudophosphorylation site binds to the substrate-binding region of the catalytic chain, resulting in the inhibition of its activity.

It localises to the cell membrane. Its function is as follows. Regulatory subunit of the cAMP-dependent protein kinases involved in cAMP signaling in cells. This chain is cAMP-dependent protein kinase type I-alpha regulatory subunit (PRKAR1A), found in Pongo abelii (Sumatran orangutan).